Reading from the N-terminus, the 286-residue chain is ATP synthase gamma chain (286 aa).

The protein belongs to the ATPase gamma chain family. In terms of assembly, F-type ATPases have 2 components, CF(1) - the catalytic core - and CF(0) - the membrane proton channel. CF(1) has five subunits: alpha(3), beta(3), gamma(1), delta(1), epsilon(1). CF(0) has three main subunits: a, b and c.

Its subcellular location is the cell inner membrane. Produces ATP from ADP in the presence of a proton gradient across the membrane. The gamma chain is believed to be important in regulating ATPase activity and the flow of protons through the CF(0) complex. This chain is ATP synthase gamma chain, found in Pseudomonas fluorescens (strain ATCC BAA-477 / NRRL B-23932 / Pf-5).